The sequence spans 256 residues: DNA repair protein RecO (256 aa).

The protein belongs to the RecO family.

In terms of biological role, involved in DNA repair and RecF pathway recombination. The protein is DNA repair protein RecO of Shouchella clausii (strain KSM-K16) (Alkalihalobacillus clausii).